The following is a 411-amino-acid chain: Putative glycosyltransferase SCO3672 (411 aa).

Helical transmembrane passes span 7 to 27, 45 to 65, 70 to 90, 120 to 140, 148 to 168, 169 to 189, 197 to 217, 227 to 247, 277 to 297, and 301 to 321; these read IAAA…LAAL, PVPL…AWAG, VVPL…VGAL, ETGP…TGAF, GVVG…AAVE, LMDG…GFLL, IALG…AAVL, GAGV…LVLL, GVVV…VLAH, and VGGQ…LGLL.

The protein belongs to the glycosyltransferase 4 family.

It is found in the cell membrane. In Streptomyces coelicolor (strain ATCC BAA-471 / A3(2) / M145), this protein is Putative glycosyltransferase SCO3672.